The primary structure comprises 283 residues: uncharacterized protein (283 aa).

Solcar repeat units lie at residues Q14–L95, N102–V185, and G190–G274. The next 6 membrane-spanning stretches (helical) occupy residues T20 to I40, G70 to S90, A105 to L125, F157 to M177, A184 to A204, and G249 to L266.

It belongs to the mitochondrial carrier (TC 2.A.29) family.

The protein resides in the mitochondrion inner membrane. This is an uncharacterized protein from Schizosaccharomyces pombe (strain 972 / ATCC 24843) (Fission yeast).